The chain runs to 391 residues: MGTWCERCRRRDEQDYRNLDDCQKHFLLLMMGDFQHEIRGEQIVEQLTIPKEFVQRLKGDIPEEIQLETHNRNSYTVRVDKSQEKVIFAAGWAQFVKTFDLHMGDSMMFRFKGNSQFDVIIFDQVGREKVCSVAVDDYLDPNVQEGRTDATETLNSSRAHSQDDYLDPNVQEGRTNATETLNSSRAHSQPMPMQTPATETLNSSRAHSQDMPMQSPATETLNSSRAHPQPMPMQLPTETVNHFHAPHYPMQMPIENMALSRTQAMPTQMQSPPTYRWTQVQRDNLRYSLPSEDQGCRVGVIPDPIIGRRTKLNPVQEKVVNFKIQHIHSEIPIFVAVIKRSNVSGVLSTLSVAKRYVDEYLGGERFISLSRLGGKWGIRLLLVGVGVAQGW.

Positions 32–125 form a DNA-binding region, TF-B3; that stretch reads GDFQHEIRGE…QFDVIIFDQV (94 aa). Positions 143–232 are disordered; the sequence is VQEGRTDATE…SSRAHPQPMP (90 aa). Residues 172 to 226 show a composition bias toward polar residues; the sequence is EGRTNATETLNSSRAHSQPMPMQTPATETLNSSRAHSQDMPMQSPATETLNSSRA.

It localises to the nucleus. The polypeptide is Putative B3 domain-containing protein Os08g0325100 (Oryza sativa subsp. japonica (Rice)).